Reading from the N-terminus, the 434-residue chain is Innexin-14 (434 aa).

4 helical membrane passes run 30–50 (LFTV…QHFG), 106–126 (WVPF…WCWA), 301–321 (IFIG…IGTV), and 365–385 (YLCA…GFLK).

This sequence belongs to the pannexin family.

The protein resides in the cell membrane. Its subcellular location is the cell junction. It is found in the gap junction. In terms of biological role, structural component of the gap junctions. In Caenorhabditis elegans, this protein is Innexin-14 (inx-14).